The chain runs to 439 residues: Glutamyl-tRNA(Gln) amidotransferase subunit D (439 aa).

The 332-residue stretch at 88-419 (GKVKIISTGG…EEVKRIMLTN (332 aa)) folds into the Asparaginase/glutaminase domain. Residues Thr-98, Thr-174, Asp-175, and Lys-253 contribute to the active site.

This sequence belongs to the asparaginase 1 family. GatD subfamily. In terms of assembly, heterodimer of GatD and GatE.

It catalyses the reaction L-glutamyl-tRNA(Gln) + L-glutamine + ATP + H2O = L-glutaminyl-tRNA(Gln) + L-glutamate + ADP + phosphate + H(+). Allows the formation of correctly charged Gln-tRNA(Gln) through the transamidation of misacylated Glu-tRNA(Gln) in organisms which lack glutaminyl-tRNA synthetase. The reaction takes place in the presence of glutamine and ATP through an activated gamma-phospho-Glu-tRNA(Gln). The GatDE system is specific for glutamate and does not act on aspartate. This is Glutamyl-tRNA(Gln) amidotransferase subunit D from Metallosphaera sedula (strain ATCC 51363 / DSM 5348 / JCM 9185 / NBRC 15509 / TH2).